The following is a 729-amino-acid chain: Fatty acid oxidation complex subunit alpha (729 aa).

Residues 1–189 form an enoyl-CoA hydratase/isomerase region; it reads MLYKGDTLYL…KIGLVDGVVK (189 aa). Aspartate 296 lines the substrate pocket. Residues 311 to 729 form a 3-hydroxyacyl-CoA dehydrogenase region; it reads ETPKQAAVLG…ARPVGDLKTA (419 aa). Residues methionine 324, aspartate 343, 400 to 402, lysine 407, and serine 429 contribute to the NAD(+) site; that span reads VVE. The active-site For 3-hydroxyacyl-CoA dehydrogenase activity is histidine 450. An NAD(+)-binding site is contributed by asparagine 453. 2 residues coordinate substrate: asparagine 500 and tyrosine 660. A disordered region spans residues 708-729; sequence RHNEPYYPPVEPARPVGDLKTA.

In the N-terminal section; belongs to the enoyl-CoA hydratase/isomerase family. It in the C-terminal section; belongs to the 3-hydroxyacyl-CoA dehydrogenase family. Heterotetramer of two alpha chains (FadB) and two beta chains (FadA).

It catalyses the reaction a (3S)-3-hydroxyacyl-CoA + NAD(+) = a 3-oxoacyl-CoA + NADH + H(+). The catalysed reaction is a (3S)-3-hydroxyacyl-CoA = a (2E)-enoyl-CoA + H2O. The enzyme catalyses a 4-saturated-(3S)-3-hydroxyacyl-CoA = a (3E)-enoyl-CoA + H2O. It carries out the reaction (3S)-3-hydroxybutanoyl-CoA = (3R)-3-hydroxybutanoyl-CoA. It catalyses the reaction a (3Z)-enoyl-CoA = a 4-saturated (2E)-enoyl-CoA. The catalysed reaction is a (3E)-enoyl-CoA = a 4-saturated (2E)-enoyl-CoA. Its pathway is lipid metabolism; fatty acid beta-oxidation. In terms of biological role, involved in the aerobic and anaerobic degradation of long-chain fatty acids via beta-oxidation cycle. Catalyzes the formation of 3-oxoacyl-CoA from enoyl-CoA via L-3-hydroxyacyl-CoA. It can also use D-3-hydroxyacyl-CoA and cis-3-enoyl-CoA as substrate. This chain is Fatty acid oxidation complex subunit alpha, found in Escherichia coli (strain UTI89 / UPEC).